Consider the following 310-residue polypeptide: Methionyl-tRNA formyltransferase (310 aa).

Residue 111-114 coordinates (6S)-5,6,7,8-tetrahydrofolate; that stretch reads SLLP.

Belongs to the Fmt family.

It catalyses the reaction L-methionyl-tRNA(fMet) + (6R)-10-formyltetrahydrofolate = N-formyl-L-methionyl-tRNA(fMet) + (6S)-5,6,7,8-tetrahydrofolate + H(+). Attaches a formyl group to the free amino group of methionyl-tRNA(fMet). The formyl group appears to play a dual role in the initiator identity of N-formylmethionyl-tRNA by promoting its recognition by IF2 and preventing the misappropriation of this tRNA by the elongation apparatus. In Afipia carboxidovorans (strain ATCC 49405 / DSM 1227 / KCTC 32145 / OM5) (Oligotropha carboxidovorans), this protein is Methionyl-tRNA formyltransferase.